The chain runs to 225 residues: Ras-related protein Rab-21 (225 aa).

Position 2 is an N-acetylalanine (Ala-2). Positions 28, 31, 32, 33, 34, 45, 46, 48, 50, and 51 each coordinate GTP. Thr-33 provides a ligand contact to Mg(2+). Positions 43 to 56 (KFNDKHITTLQASF) match the Switch 1 motif. Residues Thr-51 and Asp-74 each coordinate Mg(2+). The short motif at 76–94 (AGQERFHALGPIYYRDSNG) is the Switch 2 element. GTP contacts are provided by Gly-77, Asn-132, Lys-133, Asp-135, Ala-163, and Lys-164. The tract at residues 188-225 (ERAKGNGSSQPGTARRGVQIIDDEPQAQTSGGGCCSSG) is disordered. Residues Cys-221 and Cys-222 are each lipidated (S-geranylgeranyl cysteine). Cys-222 carries the post-translational modification Cysteine methyl ester. The propeptide at 223–225 (SSG) is removed in mature form.

The protein belongs to the small GTPase superfamily. Rab family. As to quaternary structure, interacts with the cytoplasmic tail of integrins ITGA1, ITGA2, ITGA5, ITGA6, ITGA11 and ITGB1. Interacts with RABGEF1 (via VPS9 domain). Interacts with ANKRD27. Interacts with VAMP7. Interacts (in GTP-bound form) with VAMP8 in response to starvation; the interaction probably regulates VAMP8 endolysosomal trafficking. Interacts (active GTP-bound form) with TMED10; the interaction is indirect and regulates TMED10 abundance and localization at the Golgi. Requires Mg(2+) as cofactor. As to expression, widely expressed. In jejunal tissue, predominantly expressed in the apical region of the epithelial cell layer of the villi, weak expression, if any, in the crypt epithelium. Capillary endothelium and some cell types in the lamina propria also show expression.

The protein resides in the endoplasmic reticulum membrane. It is found in the golgi apparatus. The protein localises to the trans-Golgi network. It localises to the golgi apparatus membrane. Its subcellular location is the early endosome membrane. The protein resides in the cytoplasmic vesicle membrane. It is found in the cleavage furrow. The protein localises to the cell projection. It localises to the neuron projection. The catalysed reaction is GTP + H2O = GDP + phosphate + H(+). Regulated by guanine nucleotide exchange factors (GEFs) including ANKRD27 and RABGEF1, which promote the exchange of bound GDP for free GTP. Regulated by GTPase activating proteins (GAPs) which increase the GTP hydrolysis activity. Inhibited by GDP dissociation inhibitors (GDIs). Its function is as follows. The small GTPases Rab are key regulators of intracellular membrane trafficking, from the formation of transport vesicles to their fusion with membranes. Rabs cycle between an inactive GDP-bound form and an active GTP-bound form that is able to recruit to membranes different sets of downstream effectors directly responsible for vesicle formation, movement, tethering and fusion. RAB21 is involved in membrane trafficking control. During the mitosis of adherent cells, controls the endosomal trafficking of integrins which is required for the successful completion of cytokinesis. Regulates integrin internalization and recycling, but does not influence the traffic of endosomally translocated receptors in general. As a result, may regulate cell adhesion and migration. Involved in neurite growth. Following SBF2/MTMT13-mediated activation in response to starvation-induced autophagy, binds to and regulates SNARE protein VAMP8 endolysosomal transport required for SNARE-mediated autophagosome-lysosome fusion. Modulates protein levels of the cargo receptors TMED2 and TMED10, and required for appropriate Golgi localization of TMED10. This chain is Ras-related protein Rab-21, found in Homo sapiens (Human).